We begin with the raw amino-acid sequence, 411 residues long: ATP-dependent Clp protease ATP-binding subunit ClpX (411 aa).

The region spanning 1–49 (MSDKNIRCSFCGRTQKEVKKLIAGPGVYICDECVKLAYDIIEEEDSEEI) is the ClpX-type ZB domain. Residues C8, C11, C30, and C33 each coordinate Zn(2+). 115–122 (PTGVGKTL) provides a ligand contact to ATP.

Belongs to the ClpX chaperone family. Component of the ClpX-ClpP complex. Forms a hexameric ring that, in the presence of ATP, binds to fourteen ClpP subunits assembled into a disk-like structure with a central cavity, resembling the structure of eukaryotic proteasomes.

ATP-dependent specificity component of the Clp protease. It directs the protease to specific substrates. Can perform chaperone functions in the absence of ClpP. This Dictyoglomus turgidum (strain DSM 6724 / Z-1310) protein is ATP-dependent Clp protease ATP-binding subunit ClpX.